Reading from the N-terminus, the 355-residue chain is Heterogeneous nuclear ribonucleoprotein D0 (355 aa).

The segment at 1–91 (MSEEQFGGDG…SSPRHTEAAA (91 aa)) is disordered. Ser2 bears the N-acetylserine mark. Over residues 11-43 (AAAAATAAVGGSAGEQEGAMVAAAAQGPAAAAG) the composition is skewed to low complexity. A compositionally biased stretch (gly residues) spans 44 to 58 (SGSGGGGSAAGGTEG). Positions 64 to 73 (EGAKIDASKN) are enriched in basic and acidic residues. A Phosphoserine modification is found at Ser71. A Glycyl lysine isopeptide (Lys-Gly) (interchain with G-Cter in SUMO2) cross-link involves residue Lys72. Ser80, Ser82, and Ser83 each carry phosphoserine. RRM domains are found at residues 97–179 (WKMF…KTKE) and 182–261 (KKIF…MSKE). Lys119 carries the N6-methyllysine modification. Residue Thr127 is modified to Phosphothreonine. A Glycyl lysine isopeptide (Lys-Gly) (interchain with G-Cter in SUMO2) cross-link involves residue Lys129. An N6-acetyllysine modification is found at Lys165. Ser190 bears the Phosphoserine mark. A Phosphothreonine modification is found at Thr193. Lys197 is covalently cross-linked (Glycyl lysine isopeptide (Lys-Gly) (interchain with G-Cter in SUMO2)). An N6-acetyllysine mark is found at Lys243 and Lys251. Residues Glu261 and Tyr263 each carry the omega-N-methylarginine modification. Ser271 bears the Phosphoserine mark. 4 positions are modified to omega-N-methylarginine: Arg272, Arg278, Arg280, and Arg282. Asymmetric dimethylarginine; alternate is present on Arg345. Arg345 is subject to Dimethylated arginine; alternate. Omega-N-methylarginine; alternate is present on Arg345.

As to quaternary structure, identified in a IGF2BP1-dependent mRNP granule complex containing untranslated mRNAs. Part of a complex associated with the FOS mCRD domain and consisting of PABPC1, PAIP1, CSDE1/UNR and SYNCRIP. Interacts with IGF2BP2. Interacts with GTPBP1. Interacts with EIF4G1; the interaction requires RNA. Interacts with EIF3B and RPS3. Methylated by PRMT1, in an insulin-dependent manner. The PRMT1-mediated methylation regulates its phosphorylation. Post-translationally, arg-345 is dimethylated, probably to asymmetric dimethylarginine.

It is found in the nucleus. It localises to the cytoplasm. Binds with high affinity to RNA molecules that contain AU-rich elements (AREs) found within the 3'-UTR of many proto-oncogenes and cytokine mRNAs. Also binds to double- and single-stranded DNA sequences in a specific manner and functions a transcription factor. Each of the RNA-binding domains specifically can bind solely to a single-stranded non-monotonous 5'-UUAG-3' sequence and also weaker to the single-stranded 5'-TTAGGG-3' telomeric DNA repeat. Binds RNA oligonucleotides with 5'-UUAGGG-3' repeats more tightly than the telomeric single-stranded DNA 5'-TTAGGG-3' repeats. Binding of RRM1 to DNA inhibits the formation of DNA quadruplex structure which may play a role in telomere elongation. May be involved in translationally coupled mRNA turnover. Implicated with other RNA-binding proteins in the cytoplasmic deadenylation/translational and decay interplay of the FOS mRNA mediated by the major coding-region determinant of instability (mCRD) domain. May play a role in the regulation of the rhythmic expression of circadian clock core genes. Directly binds to the 3'UTR of CRY1 mRNA and induces CRY1 rhythmic translation. May also be involved in the regulation of PER2 translation. This Mus musculus (Mouse) protein is Heterogeneous nuclear ribonucleoprotein D0 (Hnrnpd).